Reading from the N-terminus, the 418-residue chain is Tryptophan synthase beta chain (418 aa).

Polar residues predominate over residues 1–12 (MTSTLPTANTPD). Positions 1-21 (MTSTLPTANTPDPASLMPSVR) are disordered. Position 111 is an N6-(pyridoxal phosphate)lysine (K111).

This sequence belongs to the TrpB family. In terms of assembly, tetramer of two alpha and two beta chains. Pyridoxal 5'-phosphate is required as a cofactor.

The enzyme catalyses (1S,2R)-1-C-(indol-3-yl)glycerol 3-phosphate + L-serine = D-glyceraldehyde 3-phosphate + L-tryptophan + H2O. Its pathway is amino-acid biosynthesis; L-tryptophan biosynthesis; L-tryptophan from chorismate: step 5/5. Its function is as follows. The beta subunit is responsible for the synthesis of L-tryptophan from indole and L-serine. The sequence is that of Tryptophan synthase beta chain from Synechococcus sp. (strain CC9311).